Here is a 1252-residue protein sequence, read N- to C-terminus: HEAT repeat-containing protein 6 (1252 aa).

Residues 230-269 (PDLLGKSGLLMKLSDVTHSDPEVRRAAVHCMANLCLSVPG) form an HEAT 1 repeat. A disordered region spans residues 365 to 417 (DGRSPVKPQQPESSAARPSANKKKKYKVKPKKTQQGEKAEEEEPYGEVDAAPG). Residues 384–396 (ANKKKKYKVKPKK) show a composition bias toward basic residues. Phosphoserine is present on residues serine 471 and serine 474. 3 HEAT repeats span residues 524-562 (ELGSPQSVSLMTLTLKDPSPKTRACALQVLSAILEGSKQ), 586-624 (SSIRELHRCLLLALVAESSSQTLTQIIKCLANLVSNAPY), and 630-667 (SLLTKVWNHIKPYIRHKDVNVRVSSLTLLGAVVSTHAP). Residue threonine 689 is modified to Phosphothreonine. Position 714 is a phosphoserine (serine 714).

The polypeptide is HEAT repeat-containing protein 6 (Heatr6) (Rattus norvegicus (Rat)).